The primary structure comprises 132 residues: Small ribosomal subunit protein uS8 (132 aa).

This sequence belongs to the universal ribosomal protein uS8 family. In terms of assembly, part of the 30S ribosomal subunit. Contacts proteins S5 and S12.

In terms of biological role, one of the primary rRNA binding proteins, it binds directly to 16S rRNA central domain where it helps coordinate assembly of the platform of the 30S subunit. In Francisella tularensis subsp. holarctica (strain FTNF002-00 / FTA), this protein is Small ribosomal subunit protein uS8.